The following is a 530-amino-acid chain: MSISLGNAFIKNFLGKAPDWYKIAILSFLVINPLVFFFVDPFTAGWLLVVEFIFTLAMALKCYPLQPGGLLAIEAIAIGMTSPEQVKHELVANIEVLLLLVFMVAGIYFMKQLLLFIFTKILIGIKSKTALSVAFCFTAAFLSAFLDALTVIAVVISVAVGFYAIYHRVASGQGGSQTHDHTCDSDVDELTREDLEDYRAFLRSLLIHAGVGTALGGVMTMVGEPQNLIIADQAGWMFGEFIIRMLPITAPVFICGILTCIAVEKLGICGYGAKLPENVRKILEDYEAEERKNRTNIDNAKLIIQGLIAVWLIVGLALHLAAVGLIGLSVIILATAFTGVIEEHSMGKAFEEALPFTALLAVFFAVVAVIIDQELFKPIIDAVLAVEDKGAQLALFYVANGVLSMVSDNVFVGTVYINEVKAALMDGVITRDQFDLLAVAINTGTNLPSVATPNGQAAFLFLLTSALAPLIQLSYGRMVWMALPYTIVLALVGMFGIIFFLEPMTAMFYDLGWIAPGTIESATSAISSGH.

12 consecutive transmembrane segments (helical) span residues 13–33 (FLGK…VINP), 34–54 (LVFF…EFIF), 90–110 (LVAN…IYFM), 121–141 (ILIG…TAAF), 145–165 (FLDA…FYAI), 205–225 (LLIH…VGEP), 241–261 (FIIR…LTCI), 306–326 (GLIA…VGLI), 327–347 (GLSV…HSMG), 351–371 (EEAL…AVII), 455–475 (GQAA…QLSY), and 481–501 (MALP…IFFL).

Belongs to the NhaB Na(+)/H(+) (TC 2.A.34) antiporter family.

It localises to the cell inner membrane. It carries out the reaction 2 Na(+)(in) + 3 H(+)(out) = 2 Na(+)(out) + 3 H(+)(in). Functionally, na(+)/H(+) antiporter that extrudes sodium in exchange for external protons. The protein is Na(+)/H(+) antiporter NhaB of Aliivibrio fischeri (strain MJ11) (Vibrio fischeri).